The primary structure comprises 299 residues: Taste receptor type 2 member 50 (299 aa).

Position 1 (methionine 1) is a topological domain, extracellular. Residues 2–22 (VTFLHIFFSILILVLFVLGNF) form a helical membrane-spanning segment. Over 23-55 (ANGFIALVNFIDLVKRKKISSADQILTALAVSR) the chain is Cytoplasmic. Residues 56–76 (IGLLWALLLNWYLTVLNPAFY) traverse the membrane as a helical segment. Residues 77–87 (SVELRITSYNA) are Extracellular-facing. The chain crosses the membrane as a helical span at residues 88 to 108 (WVVTNHFSMWLAASLSIFYLL). Residues 109–126 (KIANFSNLIFLHLKRRVR) lie on the Cytoplasmic side of the membrane. A helical membrane pass occupies residues 127 to 147 (SVILVILLGPLTFLVCHLFVA). Topologically, residues 148-181 (NMDESMSAEEYEGNMTGKLKLRNTVHLSYLTVTT) are extracellular. Residue asparagine 161 is glycosylated (N-linked (GlcNAc...) asparagine). Residues 182–202 (LWSFIPFTLSLISFLMLICSL) traverse the membrane as a helical segment. Residues 203–229 (CKHVKKMQLHGEGSQDLSTKVHIKALQ) lie on the Cytoplasmic side of the membrane. The helical transmembrane segment at 230 to 250 (TLISFLLLCAIFFLFLIISIW) threads the bilayer. Topologically, residues 251–259 (NPRRLQNDP) are extracellular. The helical transmembrane segment at 260–280 (VVVVSKAVGNIYLALDSFILI) threads the bilayer. The Cytoplasmic segment spans residues 281-299 (WRTKKLKHTFLLILCQIRC).

It belongs to the G-protein coupled receptor T2R family.

It localises to the membrane. In terms of biological role, receptor that may play a role in the perception of bitterness and is gustducin-linked. May play a role in sensing the chemical composition of the gastrointestinal content. The activity of this receptor may stimulate alpha gustducin, mediate PLC-beta-2 activation and lead to the gating of TRPM5. The polypeptide is Taste receptor type 2 member 50 (TAS2R50) (Pongo pygmaeus (Bornean orangutan)).